The sequence spans 322 residues: Lipoyl synthase (322 aa).

[4Fe-4S] cluster is bound by residues Cys61, Cys66, Cys72, Cys87, Cys91, Cys94, and Ser300. The region spanning Trp73–Leu289 is the Radical SAM core domain.

It belongs to the radical SAM superfamily. Lipoyl synthase family. Requires [4Fe-4S] cluster as cofactor.

Its subcellular location is the cytoplasm. The enzyme catalyses [[Fe-S] cluster scaffold protein carrying a second [4Fe-4S](2+) cluster] + N(6)-octanoyl-L-lysyl-[protein] + 2 oxidized [2Fe-2S]-[ferredoxin] + 2 S-adenosyl-L-methionine + 4 H(+) = [[Fe-S] cluster scaffold protein] + N(6)-[(R)-dihydrolipoyl]-L-lysyl-[protein] + 4 Fe(3+) + 2 hydrogen sulfide + 2 5'-deoxyadenosine + 2 L-methionine + 2 reduced [2Fe-2S]-[ferredoxin]. The protein operates within protein modification; protein lipoylation via endogenous pathway; protein N(6)-(lipoyl)lysine from octanoyl-[acyl-carrier-protein]: step 2/2. In terms of biological role, catalyzes the radical-mediated insertion of two sulfur atoms into the C-6 and C-8 positions of the octanoyl moiety bound to the lipoyl domains of lipoate-dependent enzymes, thereby converting the octanoylated domains into lipoylated derivatives. This Rhizobium meliloti (strain 1021) (Ensifer meliloti) protein is Lipoyl synthase.